Here is a 93-residue protein sequence, read N- to C-terminus: Large ribosomal subunit protein uL23cz/uL23cy (93 aa).

This sequence belongs to the universal ribosomal protein uL23 family. In terms of assembly, part of the 50S ribosomal subunit.

It is found in the plastid. The protein resides in the chloroplast. Functionally, binds to 23S rRNA. This chain is Large ribosomal subunit protein uL23cz/uL23cy (rpl23-A), found in Lactuca sativa (Garden lettuce).